A 66-amino-acid polypeptide reads, in one-letter code: Large ribosomal subunit protein bL32 (66 aa).

Belongs to the bacterial ribosomal protein bL32 family.

The polypeptide is Large ribosomal subunit protein bL32 (Rickettsia conorii (strain ATCC VR-613 / Malish 7)).